A 299-amino-acid polypeptide reads, in one-letter code: uncharacterized protein (299 aa).

A compositionally biased stretch (polar residues) spans 1–10 (MTSIIQSPPL). Disordered stretches follow at residues 1–30 (MTSI…NNNN), 54–89 (KLNN…INNN), and 148–212 (QDYT…SDYV). Residues 56–89 (NNNNNNNNNNNNNNNNNNNNNNNNSSSNNNINNN) are compositionally biased toward low complexity. Composition is skewed to acidic residues over residues 150–169 (YTDE…DEEE) and 177–212 (ECEE…SDYV).

This is an uncharacterized protein from Dictyostelium discoideum (Social amoeba).